Consider the following 828-residue polypeptide: Protein TAPT1 homolog (828 aa).

Low complexity-rich tracts occupy residues 67-83 (NNNNNNNSNNVSSGNHI), 212-233 (QQTQPQPQPQTQTTQQPSSQQP), and 302-321 (SNNNDNNDNNNNNNSKNNNN). Disordered stretches follow at residues 67–92 (NNNNNNNSNNVSSGNHITNSNSNSSG), 212–236 (QQTQPQPQPQTQTTQQPSSQQPFSY), and 297–346 (QTTP…TSSI). Transmembrane regions (helical) follow at residues 428 to 448 (ISFGFLVCFDSFLFLFTFLPI), 472 to 492 (QIFDLFRGFIWVTCFVFLNFI), 562 to 582 (ILGPFTHLLVATGYVCLHSLV), 722 to 742 (SSWGVNNIIGFVPFPLASIVV), and 754 to 774 (IFGIFLMVQIYICLVLLKIFI). Residues 797 to 822 (LSSSSSSSSSNSLNTTSTTSTSTSTT) show a composition bias toward low complexity. Positions 797 to 828 (LSSSSSSSSSNSLNTTSTTSTSTSTTNDKKNN) are disordered.

The protein belongs to the TAPT1 family.

It is found in the membrane. This is Protein TAPT1 homolog from Dictyostelium discoideum (Social amoeba).